A 115-amino-acid polypeptide reads, in one-letter code: Migration and invasion enhancer 1 (115 aa).

N-acetylserine is present on S2. A disulfide bridge links C30 with C33. The S-geranylgeranyl cysteine moiety is linked to residue C112. A propeptide spans 113 to 115 (VIL) (removed in mature form).

It belongs to the SelWTH family. As to quaternary structure, interacts with GPX1. Isoprenylation facilitates association with the plasma membrane and enhances the migratory phenotype of cells by inducing increased filopodia formation. Widely expressed with highest levels in kidney followed by brain and testis.

It is found in the cytoplasm. Its subcellular location is the cytosol. The protein localises to the cell membrane. Functionally, increases cell migration by inducing filopodia formation at the leading edge of migrating cells. Plays a role in regulation of apoptosis, possibly through control of CASP3. May be involved in a redox-related process. This is Migration and invasion enhancer 1 (Mien1) from Mus musculus (Mouse).